We begin with the raw amino-acid sequence, 1250 residues long: MEQLSDEEIDHGAEEDSDKEDQDLDKMFGAWLGELDKLTQSLDSDKPMEPVKRSPLRQETNMANFSYRFSIYNLNEALNQGETVDLDALMADLCSIEQELSSIGSGNSKRQITETKATQKLPVSRHTLKHGTLKGLSSSSNRIAKPSHASYSLDDVTAQLEQASLSMDEAAQQSVLEDTKPLVTNQHRRTASAGTVSDAEVHSISNSSHSSITSAASSMDSLDIDKVTRPQELDLTHQGQPITEEEQAAKLKAEKIRVALEKIKEAQVKKLVIRVHMSDDSSKTMMVDERQTVRQVLDNLMDKSHCGYSLDWSLVETVSELQMERIFEDHENLVENLLNWTRDSQNKLIFMERIEKYALFKNPQNYLLGKKETAEMADRNKEVLLEECFCGSSVTVPEIEGVLWLKDDGKKSWKKRYFLLRASGIYYVPKGKAKVSRDLVCFLQLDHVNVYYGQDYRNKYKAPTDYCLVLKHPQIQKKSQYIKYLCCDDVRTLHQWVNGIRIAKYGKQLYMNYQEALKRTESAYDWTSLSSSSIKSGSSSSSIPESQSNHSNQSDSGVSDTQPAGHVRSQSIVSSVFSEAWKRGTQLEESSKARMESMNRPYTSLVPPLSPQPKIVTPYTASQPSPPLPPPPPPPPPPPPPPPPPPPPLPSQSAPSAGSAAPMFVKYSTITRLQNASQHSGALFKPPTPPVMQSQSVKPQILVPPNGVVPPPPPPPPPPTPGSAMAQLKPAPCAPSLPQFSAPPPPLKIHQVQHITQVAPPTPPPPPPIPAPLPPQAPPKPLVTIPAPTSTKTVAPVVTQAAPPTPTPPVPPAKKQPAFPASYIPPSPPTPPVPVPPPTLPKQQSFCAKPPPSPLSPVPSVVKQIASQFPPPPTPPAMESQPLKPVPANVAPQSPPAVKAKPKWQPSSIPVPSPDFPPPPPESSLVFPPPPPSPVPAPPPPPPPTASPTPDKSGSPGKKTSKTSSPGGKKPPPTPQRNSSIKSSSGAEHPEPKRPSVDSLVSKFTPPAESGSPSKETLPPPAAPPKPGKLNLSGVNLPGVLQQGCVSAKAPVLSGRGKDSVVEFPSPPSDSDFPPPPPETELPLPPIEIPAVFSGNTSPKVAVVNPQPQQWSKMSVKKAPPPTRPKRNDSTRLTQAEISEQPTMATVVPQVPTSPKSSLSVQPGFLADLNRTLQRKSITRHGSLSSRMSRAEPTATMDDMALPPPPPELLSDQQKAGYGGSHISGYATLRRGPPPAPPKRDQNTKLSRDW.

M1 carries the post-translational modification N-acetylmethionine. Residues 1–23 (MEQLSDEEIDHGAEEDSDKEDQD) show a composition bias toward acidic residues. Residues 1–26 (MEQLSDEEIDHGAEEDSDKEDQDLDK) form a disordered region. 7 positions are modified to phosphoserine: S5, S17, S54, S150, S192, S203, and S205. The tract at residues 179–217 (TKPLVTNQHRRTASAGTVSDAEVHSISNSSHSSITSAAS) is disordered. Over residues 202 to 217 (HSISNSSHSSITSAAS) the composition is skewed to low complexity. The region spanning 269 to 355 (KKLVIRVHMS…NKLIFMERIE (87 aa)) is the Ras-associating domain. The region spanning 396–505 (VPEIEGVLWL…WVNGIRIAKY (110 aa)) is the PH domain. Phosphotyrosine; by ABL1 occurs at positions 426 and 456. A compositionally biased stretch (low complexity) spans 535–551 (KSGSSSSSIPESQSNHS). Disordered stretches follow at residues 535-570 (KSGS…VRSQ), 588-663 (EESS…AAPM), 675-1036 (NASQ…SGVN), 1050-1162 (APVL…LSVQ), and 1176-1250 (KSIT…SRDW). Over residues 552–570 (NQSDSGVSDTQPAGHVRSQ) the composition is skewed to polar residues. The segment covering 588 to 597 (EESSKARMES) has biased composition (basic and acidic residues). S610 carries the phosphoserine modification. The span at 624–650 (PSPPLPPPPPPPPPPPPPPPPPPPPLP) shows a compositional bias: pro residues. Low complexity predominate over residues 651–662 (SQSAPSAGSAAP). Composition is skewed to pro residues over residues 707-721 (GVVP…PPTP) and 760-781 (PPTP…PPKP). The segment covering 791-802 (TKTVAPVVTQAA) has biased composition (low complexity). Composition is skewed to pro residues over residues 803–814 (PPTPTPPVPPAK) and 823–840 (YIPP…PPTL). S827 is subject to Phosphoserine. Position 830 is a phosphothreonine (T830). A phosphoserine mark is found at S845, S853, and S894. Pro residues predominate over residues 909–947 (IPVPSPDFPPPPPESSLVFPPPPPSPVPAPPPPPPPTAS). The span at 948-968 (PTPDKSGSPGKKTSKTSSPGG) shows a compositional bias: low complexity. S965 carries the post-translational modification Phosphoserine. T974 carries the phosphothreonine modification. A compositionally biased stretch (polar residues) spans 976-986 (QRNSSIKSSSG). Residues S996 and S1012 each carry the phosphoserine modification. Pro residues-rich tracts occupy residues 1018–1027 (LPPPAAPPKP) and 1065–1088 (PSPP…PPIE). Polar residues-rich tracts occupy residues 1131-1144 (TRLT…QPTM) and 1151-1161 (VPTSPKSSLSV). A Phosphoserine modification is found at S1183. Y1226 bears the Phosphotyrosine; by ABL1 mark. A compositionally biased stretch (basic and acidic residues) spans 1238–1250 (PKRDQNTKLSRDW).

This sequence belongs to the MRL family. In terms of assembly, interacts with EVL and VASP and targets them to the leading edge. Interacts (via Ras associating and PH domains) with RAC1. Isoform RMO1-RAPH1 is ubiquitously expressed with highest levels in brain, heart, ovary and developing embryo. Isoform RMO1 is widely expressed with highest levels in liver. Low expression in B-cells.

The protein localises to the cell membrane. It is found in the cell projection. Its subcellular location is the lamellipodium. The protein resides in the filopodium. It localises to the cytoplasm. The protein localises to the cytoskeleton. Mediator of localized membrane signals. Implicated in the regulation of lamellipodial dynamics. Negatively regulates cell adhesion. In Homo sapiens (Human), this protein is Ras-associated and pleckstrin homology domains-containing protein 1 (RAPH1).